Here is a 100-residue protein sequence, read N- to C-terminus: Urease subunit gamma (100 aa).

Belongs to the urease gamma subunit family. In terms of assembly, heterotrimer of UreA (gamma), UreB (beta) and UreC (alpha) subunits. Three heterotrimers associate to form the active enzyme.

The protein localises to the cytoplasm. It carries out the reaction urea + 2 H2O + H(+) = hydrogencarbonate + 2 NH4(+). It functions in the pathway nitrogen metabolism; urea degradation; CO(2) and NH(3) from urea (urease route): step 1/1. This is Urease subunit gamma from Laribacter hongkongensis (strain HLHK9).